The sequence spans 568 residues: Small ribosomal subunit protein bS1 (568 aa).

6 consecutive S1 motif domains span residues 27-93 (GYVA…LSRE), 111-177 (GERV…VSRR), 198-266 (GQVV…LGMK), 283-353 (GKKI…LGLK), 370-440 (GTEV…LGIK), and 459-530 (NAVV…LSIK).

Belongs to the bacterial ribosomal protein bS1 family.

Binds mRNA; thus facilitating recognition of the initiation point. It is needed to translate mRNA with a short Shine-Dalgarno (SD) purine-rich sequence. This Rhizobium meliloti (strain 1021) (Ensifer meliloti) protein is Small ribosomal subunit protein bS1 (rpsA).